Reading from the N-terminus, the 547-residue chain is MASEILVNIKEEVTCPICLDLLTEPLSLDCGHSFCQACITADHKESTLHQGERSCPLCRVGYQSENLRPNRHLANIAERLREVMLSPEEGQKVDRCARHGEKLLLFCQQHGNVICWLCERSQEHRGHSTFLVEEVAQKYREKLQVALEMMREKQQDAEKLEADVREEQASWKIQIKNDKTNILAEFKQLRDILDCEESNELQNLEKEEENLLKILAQSENDMVLQTQSMRVLIADLEHRLQGSVMELLQGVEGIIKRTTNVTLQKPKTFLNEKRRVFRAPNLKGMLQVFKELKEVQCYWAHVTLVPSHPSCAVISEDQRQVRYQKQRHRPSVKAKYFYGVLGSPSFTSGKHYWEVDVSNKSAWILGVCVSLKCTANVPGIENYQPKNGYWVIGLQNADNYSAFQDAVPGTEDYQPKNGCWRNTGLRNADNYSAFQDVFQPKNDYWVTGLWNADNYNAFQDAGKYSDFQDGSCSTPFAPLIVPLFMTIRPKRVGVFLDYEACTVSFFNVTSNGCLIYKFSNCHFSCPVFPYFSPMTCKLPMTLCSPSS.

N-acetylalanine is present on A2. Residues 15–59 (CPICLDLLTEPLSLDCGHSFCQACITADHKESTLHQGERSCPLCR) form an RING-type zinc finger. At S86 the chain carries Phosphoserine. The B box-type zinc-finger motif lies at 91–132 (QKVDRCARHGEKLLLFCQQHGNVICWLCERSQEHRGHSTFLV). C96, H99, C118, and H124 together coordinate Zn(2+). The stretch at 132 to 224 (VEEVAQKYRE…LAQSENDMVL (93 aa)) forms a coiled coil. Residues 186 to 199 (FKQLRDILDCEESN) are required for interaction with GABARAP and for autophagy. The 268-residue stretch at 280–547 (PNLKGMLQVF…LPMTLCSPSS (268 aa)) folds into the B30.2/SPRY domain.

This sequence belongs to the TRIM/RBCC family. As to quaternary structure, can form homodimers and homotrimers. In addition to lower-order dimerization, also exhibits a higher-order multimerization and both low- and high-order multimerizations are essential for its restriction activity. Interacts with BTBD1 and BTBD2. Interacts with PSMC4, PSMC5, PSMD7 and HSPA8/HSC70. Interacts (via B30.2/SPRY domain) with HSPA1A/B. Interacts with PSMC2, MAP3K7/TAK1, TAB2 and TAB3. Interacts with SQSTM1. Interacts with TRIM6 and TRIM34. Interacts with ULK1 (phosphorylated form), GABARAP, GABARAPL1, GABARAPL2, MAP1LC3A, MAP1LC3C and BECN1. Degraded in a proteasome-independent fashion in the absence of viral infection but in a proteasome-dependent fashion following exposure to restriction sensitive virus. Post-translationally, autoubiquitinated in a RING finger- and UBE2D2-dependent manner. Monoubiquitinated by TRIM21. Deubiquitinated by Yersinia YopJ. Ubiquitination may not lead to proteasomal degradation.

The protein localises to the cytoplasm. It localises to the nucleus. It carries out the reaction S-ubiquitinyl-[E2 ubiquitin-conjugating enzyme]-L-cysteine + [acceptor protein]-L-lysine = [E2 ubiquitin-conjugating enzyme]-L-cysteine + N(6)-ubiquitinyl-[acceptor protein]-L-lysine.. It participates in protein modification; protein ubiquitination. Its function is as follows. Capsid-specific restriction factor that prevents infection from non-host-adapted retroviruses. Blocks viral replication early in the life cycle, after viral entry but before reverse transcription. In addition to acting as a capsid-specific restriction factor, also acts as a pattern recognition receptor that activates innate immune signaling in response to the retroviral capsid lattice. Binding to the viral capsid triggers its E3 ubiquitin ligase activity, and in concert with the heterodimeric ubiquitin conjugating enzyme complex UBE2V1-UBE2N (also known as UBC13-UEV1A complex) generates 'Lys-63'-linked polyubiquitin chains, which in turn are catalysts in the autophosphorylation of the MAP3K7/TAK1 complex (includes TAK1, TAB2, and TAB3). Activation of the MAP3K7/TAK1 complex by autophosphorylation results in the induction and expression of NF-kappa-B and MAPK-responsive inflammatory genes, thereby leading to an innate immune response in the infected cell. Plays a role in regulating autophagy through activation of autophagy regulator BECN1 by causing its dissociation from its inhibitors BCL2 and TAB2. The protein is Tripartite motif-containing protein 5 (TRIM5) of Lagothrix lagotricha (Brown woolly monkey).